The following is a 427-amino-acid chain: 3-phosphoshikimate 1-carboxyvinyltransferase (427 aa).

Residues K22, S23, and R27 each coordinate 3-phosphoshikimate. Residue K22 coordinates phosphoenolpyruvate. Phosphoenolpyruvate is bound by residues G96 and R124. 7 residues coordinate 3-phosphoshikimate: S170, S171, Q172, S199, D313, N336, and K340. Residue Q172 participates in phosphoenolpyruvate binding. The active-site Proton acceptor is D313. Positions 344, 386, and 411 each coordinate phosphoenolpyruvate.

The protein belongs to the EPSP synthase family. Monomer.

It localises to the cytoplasm. It carries out the reaction 3-phosphoshikimate + phosphoenolpyruvate = 5-O-(1-carboxyvinyl)-3-phosphoshikimate + phosphate. It participates in metabolic intermediate biosynthesis; chorismate biosynthesis; chorismate from D-erythrose 4-phosphate and phosphoenolpyruvate: step 6/7. In terms of biological role, catalyzes the transfer of the enolpyruvyl moiety of phosphoenolpyruvate (PEP) to the 5-hydroxyl of shikimate-3-phosphate (S3P) to produce enolpyruvyl shikimate-3-phosphate and inorganic phosphate. This Aeromonas salmonicida protein is 3-phosphoshikimate 1-carboxyvinyltransferase.